The sequence spans 36 residues: Trypsin inhibitor 2 (36 aa).

3 disulfide bridges follow: Cys3/Cys20, Cys10/Cys24, and Cys19/Cys35.

In terms of biological role, trypsin inhibitor. The protein is Trypsin inhibitor 2 of Spinacia oleracea (Spinach).